A 68-amino-acid polypeptide reads, in one-letter code: Large ribosomal subunit protein eL24 (68 aa).

C7, C10, C33, and C37 together coordinate Zn(2+). Residues 7–37 (CSYCGREFEPGTGKMFVRNDGRVLFFCSSKC) form a C4-type zinc finger.

This sequence belongs to the eukaryotic ribosomal protein eL24 family. In terms of assembly, part of the 50S ribosomal subunit. Forms a cluster with proteins L3 and L14. Zn(2+) is required as a cofactor.

Functionally, binds to the 23S rRNA. The sequence is that of Large ribosomal subunit protein eL24 from Thermococcus gammatolerans (strain DSM 15229 / JCM 11827 / EJ3).